The chain runs to 304 residues: HTH-type transcriptional regulator TtuA (304 aa).

Residues 1–58 (MELEQLKCFVAAAEELHFGRAAQKMGILPASLGRHLRLLEESLGTRLMSRTTRSVALT) form the HTH lysR-type domain. The H-T-H motif DNA-binding region spans 18–37 (FGRAAQKMGILPASLGRHLR).

The protein belongs to the LysR transcriptional regulatory family.

Transcriptional regulator of the ttuABCDE tartrate utilization operon. This chain is HTH-type transcriptional regulator TtuA (ttuA), found in Agrobacterium vitis (Rhizobium vitis).